Consider the following 433-residue polypeptide: Glutamate-rich protein 2 (433 aa).

Disordered regions lie at residues 56-86 (VPAA…LAPP), 113-161 (DSAS…KHPQ), 189-273 (SRQN…SIET), 308-344 (CLED…TRAP), and 394-433 (EKAQ…EDGS). The segment covering 63–85 (PAPPPPRALRPAPGPPRSAPLAP) has biased composition (pro residues). Positions 114-127 (SASQARGSEPSSSA) are enriched in polar residues. Composition is skewed to basic and acidic residues over residues 199-214 (DPKE…EKPQ) and 244-258 (ARKE…DKVS). The segment covering 259 to 273 (LKSSENRPSSRSIET) has biased composition (polar residues). Acidic residues-rich tracts occupy residues 308-334 (CLED…EDDE) and 397-433 (QEEE…EDGS).

The chain is Glutamate-rich protein 2 (Erich2) from Rattus norvegicus (Rat).